The primary structure comprises 397 residues: Elongation factor Tu (397 aa).

The region spanning 10 to 207 (KPHVNVGTIG…ACDSYIPDPQ (198 aa)) is the tr-type G domain. The segment at 19 to 26 (GHIDHGKT) is G1. 19-26 (GHIDHGKT) lines the GTP pocket. T26 provides a ligand contact to Mg(2+). Residues 60 to 64 (GITIA) form a G2 region. The segment at 81 to 84 (DCPG) is G3. GTP is bound by residues 81–85 (DCPGH) and 136–139 (NKCD). Residues 136 to 139 (NKCD) form a G4 region. Positions 174 to 176 (SAL) are G5.

Belongs to the TRAFAC class translation factor GTPase superfamily. Classic translation factor GTPase family. EF-Tu/EF-1A subfamily. Monomer.

It is found in the cytoplasm. It carries out the reaction GTP + H2O = GDP + phosphate + H(+). GTP hydrolase that promotes the GTP-dependent binding of aminoacyl-tRNA to the A-site of ribosomes during protein biosynthesis. The chain is Elongation factor Tu from Lawsonia intracellularis (strain PHE/MN1-00).